A 301-amino-acid chain; its full sequence is Homoserine O-acetyltransferase (301 aa).

Cys-142 serves as the catalytic Acyl-thioester intermediate. The substrate site is built by Lys-163 and Ser-192. His-235 (proton acceptor) is an active-site residue. Glu-237 is an active-site residue. Arg-249 provides a ligand contact to substrate.

Belongs to the MetA family.

The protein localises to the cytoplasm. It catalyses the reaction L-homoserine + acetyl-CoA = O-acetyl-L-homoserine + CoA. It functions in the pathway amino-acid biosynthesis; L-methionine biosynthesis via de novo pathway; O-acetyl-L-homoserine from L-homoserine: step 1/1. Transfers an acetyl group from acetyl-CoA to L-homoserine, forming acetyl-L-homoserine. This Bacillus cytotoxicus (strain DSM 22905 / CIP 110041 / 391-98 / NVH 391-98) protein is Homoserine O-acetyltransferase.